Here is a 412-residue protein sequence, read N- to C-terminus: Phosphoglycerate kinase 1 (412 aa).

Substrate-binding positions include 28 to 30 (DFN), 65 to 68 (HQGR), Arg122, and Arg162. ATP-binding positions include Glu336 and 361-364 (GGHT).

This sequence belongs to the phosphoglycerate kinase family. In terms of assembly, monomer.

It localises to the cytoplasm. It carries out the reaction (2R)-3-phosphoglycerate + ATP = (2R)-3-phospho-glyceroyl phosphate + ADP. It participates in carbohydrate degradation; glycolysis; pyruvate from D-glyceraldehyde 3-phosphate: step 2/5. The sequence is that of Phosphoglycerate kinase 1 from Methanosarcina acetivorans (strain ATCC 35395 / DSM 2834 / JCM 12185 / C2A).